The following is a 168-amino-acid chain: Prespore-specific protein A (168 aa).

An N-terminal signal peptide occupies residues 1–19 (MKFQHTFIALLSLLTYANA). O-linked (GlcNAc) threonine glycans are attached at residues T110, T114, T116, T118, T120, T122, T124, T126, T128, T130, T132, T134, and T138. Tandem repeats lie at residues 116–119 (TPTV), 120–123 (TPTV), and 124–127 (TPTV). Positions 116–127 (TPTVTPTVTPTV) are 3 X 4 AA tandem repeats of T-P-T-V. Low complexity predominate over residues 116–131 (TPTVTPTVTPTVTPTP). The segment at 116–147 (TPTVTPTVTPTVTPTPTNTPNPTPSQTSTTTG) is disordered. S140 is a glycosylation site (O-linked (GlcNAc) serine). G147 carries GPI-like-anchor amidated glycine lipidation. Residues 148–168 (SASTVVASLSLIIFSMILSLC) constitute a propeptide, removed in mature form.

It belongs to the ponticulin family. O-glycosylated in the repeat region. The oligosaccharides contain N-acetylglucosamine and fucose as the major constituents. In terms of processing, the GPI-like-anchor contains a phosphoceramide group, rather than a phosphatidyl group.

The protein resides in the cell membrane. In terms of biological role, may bind F-actin and nucleates actin assembly. The chain is Prespore-specific protein A (pspA) from Dictyostelium discoideum (Social amoeba).